The chain runs to 206 residues: Ras-related protein Rab-18 (206 aa).

Methionine 1 is modified (N-acetylmethionine). GTP contacts are provided by serine 17, glycine 20, lysine 21, serine 22, serine 23, aspartate 34, proline 35, threonine 40, glycine 66, lysine 123, and aspartate 125. Serine 22 contacts Mg(2+). Short sequence motifs (switch) lie at residues 31–45 and 63–80; these read DTFD…GVDF and DTAG…YYRG. Threonine 40 provides a ligand contact to Mg(2+). Serine 144 is subject to Phosphoserine. Alanine 152 lines the GTP pocket. A lipid anchor (S-palmitoyl cysteine) is attached at cysteine 199. Position 203 is a cysteine methyl ester (cysteine 203). Residue cysteine 203 is the site of S-geranylgeranyl cysteine attachment. A propeptide spans 204–206 (removed in mature form); that stretch reads SVL.

It belongs to the small GTPase superfamily. Rab family. Interacts (in GTP-bound form) with ZFYVE1. Interacts with ZW10 and this interaction is enhanced in the presence of ZFYVE1. Interacts with BSCL2. The cofactor is Mg(2+). As to expression, expression is high in the brain, moderate in the pituitary, and low in the liver. Detected in all tissues. Highly enriched on apical endocytic structures in polarized epithelial cells of kidney proximal tubules. Detected on both the apical and basolateral domains in epithelial cells of the intestine.

The protein localises to the endoplasmic reticulum membrane. The protein resides in the golgi apparatus. Its subcellular location is the cis-Golgi network membrane. It is found in the lipid droplet. It localises to the apical cell membrane. It carries out the reaction GTP + H2O = GDP + phosphate + H(+). Its activity is regulated as follows. Regulated by guanine nucleotide exchange factor (GEF) RAB3GAP1-RAB3GAP2 complex at the cis-Golgi membrane which promotes the exchange of bound GDP for free GTP. Regulated by GTPase activating protein (GAP) TBC1D20 at the ER membrane which increases the GTP hydrolysis activity. Inhibited by GDP dissociation inhibitors (GDIs) which prevent Rab-GDP dissociation. In terms of biological role, the small GTPases Rab are key regulators of intracellular membrane trafficking, from the formation of transport vesicles to their fusion with membranes. Rabs cycle between an inactive GDP-bound form and an active GTP-bound form that is able to recruit to membranes different sets of downstream effectors directly responsible for vesicle formation, movement, tethering and fusion. RAB18 is required for the localization of ZFYVE1 to lipid droplets and for its function in mediating the formation of endoplasmic reticulum-lipid droplets (ER-LD) contacts. Also required for maintaining endoplasmic reticulum structure. Plays a role in apical endocytosis/recycling. Plays a key role in eye and brain development and neurodegeneration. The protein is Ras-related protein Rab-18 of Mus musculus (Mouse).